Reading from the N-terminus, the 452-residue chain is Protein mab-21-like 4 (452 aa).

The sequence is that of Protein mab-21-like 4 (Mab21l4) from Mus musculus (Mouse).